A 364-amino-acid chain; its full sequence is DNA replication and repair protein RecF (364 aa).

30–37 lines the ATP pocket; it reads GNNGQGKT.

The protein belongs to the RecF family.

The protein localises to the cytoplasm. The RecF protein is involved in DNA metabolism; it is required for DNA replication and normal SOS inducibility. RecF binds preferentially to single-stranded, linear DNA. It also seems to bind ATP. In Geobacter sp. (strain M21), this protein is DNA replication and repair protein RecF.